Here is a 396-residue protein sequence, read N- to C-terminus: Pre-mRNA-splicing regulator WTAP (396 aa).

Methionine 1 bears the N-acetylmethionine mark. The residue at position 14 (serine 14) is a Phosphoserine. Composition is skewed to low complexity over residues 240–257 (QQQQ…TTSS) and 278–291 (SNGS…SGSG). A disordered region spans residues 240-396 (QQQQSQASAP…SSVNVQGAVL (157 aa)). Serine 297, serine 305, serine 306, and serine 341 each carry phosphoserine. Positions 305–316 (SSSGNGNKASNS) are enriched in low complexity. The span at 340–351 (DSPTGSENSLTH) shows a compositional bias: polar residues. Threonine 350 carries the post-translational modification Phosphothreonine. A compositionally biased stretch (basic and acidic residues) spans 352–368 (HSNDTDSSHDPQEEKAV). A compositionally biased stretch (polar residues) spans 380–396 (HVQNGLDSSVNVQGAVL). Residue serine 388 is modified to Phosphoserine.

The protein belongs to the fl(2)d family. In terms of assembly, component of the WMM complex, a N6-methyltransferase complex composed of a catalytic subcomplex, named MAC, and of an associated subcomplex, named MACOM. The MAC subcomplex is composed of METTL3 and METTL14. The MACOM subcomplex is composed of WTAP, ZC3H13, CBLL1/HAKAI, VIRMA, and, in some cases of RBM15 (RBM15 or RBM15B). Interacts with WT1. Also a component of a MACOM-like complex, named WTAP complex, composed of WTAP, ZC3H13, CBLL1, VIRMA, RBM15, BCLAF1 and THRAP3. Interacts with CPNE4 (via VWFA domain).

It is found in the nucleus speckle. Its subcellular location is the nucleus. It localises to the nucleoplasm. The protein localises to the cytoplasm. In terms of biological role, associated component of the WMM complex, a complex that mediates N6-methyladenosine (m6A) methylation of RNAs, a modification that plays a role in the efficiency of mRNA splicing and RNA processing. Acts as a key regulator of m6A methylation by promoting m6A methylation of mRNAs at the 3'-UTR. Required for accumulation of METTL3 and METTL14 to nuclear speckle. Acts as a mRNA splicing regulator. Regulates G2/M cell-cycle transition by binding to the 3' UTR of CCNA2, which enhances its stability. Impairs WT1 DNA-binding ability and inhibits expression of WT1 target genes. This chain is Pre-mRNA-splicing regulator WTAP, found in Mus musculus (Mouse).